A 401-amino-acid chain; its full sequence is S-adenosylmethionine synthase (401 aa).

135–140 (GHGSGD) serves as a coordination point for ATP.

It belongs to the AdoMet synthase 2 family. Mg(2+) serves as cofactor.

It catalyses the reaction L-methionine + ATP + H2O = S-adenosyl-L-methionine + phosphate + diphosphate. It functions in the pathway amino-acid biosynthesis; S-adenosyl-L-methionine biosynthesis; S-adenosyl-L-methionine from L-methionine: step 1/1. Catalyzes the formation of S-adenosylmethionine from methionine and ATP. The sequence is that of S-adenosylmethionine synthase (mat) from Methanothermobacter thermautotrophicus (strain ATCC 29096 / DSM 1053 / JCM 10044 / NBRC 100330 / Delta H) (Methanobacterium thermoautotrophicum).